Consider the following 341-residue polypeptide: Holliday junction branch migration complex subunit RuvB (341 aa).

The tract at residues 1-182 is large ATPase domain (RuvB-L); sequence MTERFVTPDF…FGVICRLEFY (182 aa). ATP-binding positions include Leu-21, Arg-22, Gly-63, Lys-66, Thr-67, Thr-68, 129–131, Arg-172, Tyr-182, and Arg-219; that span reads EDY. A Mg(2+)-binding site is contributed by Thr-67. Positions 183–253 are small ATPAse domain (RuvB-S); that stretch reads TDDELATIAG…IADMALSRLE (71 aa). The head domain (RuvB-H) stretch occupies residues 256-341; it reads NCGLDHMDRL…RGKTSGELFS (86 aa). Residues Arg-311 and Arg-316 each contribute to the DNA site.

This sequence belongs to the RuvB family. In terms of assembly, homohexamer. Forms an RuvA(8)-RuvB(12)-Holliday junction (HJ) complex. HJ DNA is sandwiched between 2 RuvA tetramers; dsDNA enters through RuvA and exits via RuvB. An RuvB hexamer assembles on each DNA strand where it exits the tetramer. Each RuvB hexamer is contacted by two RuvA subunits (via domain III) on 2 adjacent RuvB subunits; this complex drives branch migration. In the full resolvosome a probable DNA-RuvA(4)-RuvB(12)-RuvC(2) complex forms which resolves the HJ.

It localises to the cytoplasm. It catalyses the reaction ATP + H2O = ADP + phosphate + H(+). In terms of biological role, the RuvA-RuvB-RuvC complex processes Holliday junction (HJ) DNA during genetic recombination and DNA repair, while the RuvA-RuvB complex plays an important role in the rescue of blocked DNA replication forks via replication fork reversal (RFR). RuvA specifically binds to HJ cruciform DNA, conferring on it an open structure. The RuvB hexamer acts as an ATP-dependent pump, pulling dsDNA into and through the RuvAB complex. RuvB forms 2 homohexamers on either side of HJ DNA bound by 1 or 2 RuvA tetramers; 4 subunits per hexamer contact DNA at a time. Coordinated motions by a converter formed by DNA-disengaged RuvB subunits stimulates ATP hydrolysis and nucleotide exchange. Immobilization of the converter enables RuvB to convert the ATP-contained energy into a lever motion, pulling 2 nucleotides of DNA out of the RuvA tetramer per ATP hydrolyzed, thus driving DNA branch migration. The RuvB motors rotate together with the DNA substrate, which together with the progressing nucleotide cycle form the mechanistic basis for DNA recombination by continuous HJ branch migration. Branch migration allows RuvC to scan DNA until it finds its consensus sequence, where it cleaves and resolves cruciform DNA. The polypeptide is Holliday junction branch migration complex subunit RuvB (Syntrophotalea carbinolica (strain DSM 2380 / NBRC 103641 / GraBd1) (Pelobacter carbinolicus)).